We begin with the raw amino-acid sequence, 347 residues long: Inosamine-phosphate amidinotransferase 1 (347 aa).

Residues D179 and H227 contribute to the active site. Catalysis depends on C332, which acts as the Amidino-cysteine intermediate.

The protein belongs to the amidinotransferase family. As to quaternary structure, homodimer.

It carries out the reaction 1-amino-1-deoxy-scyllo-inositol 4-phosphate + L-arginine = 1-guanidino-1-deoxy-scyllo-inositol 4-phosphate + L-ornithine. The protein operates within antibiotic biosynthesis; streptomycin biosynthesis. In terms of biological role, catalyzes two non-consecutive transamidination reactions. It converts scyllo-inosamine 4-phosphate into N-amidino-scyllo-inosamine 4-phosphate and N1-amidinostreptamine 6-phosphate into streptidine 6-phosphate. The protein is Inosamine-phosphate amidinotransferase 1 (strB1) of Streptomyces griseus.